Here is a 361-residue protein sequence, read N- to C-terminus: D-alanine--D-alanine ligase (361 aa).

The ATP-grasp domain maps to 144–350; it reads KLAAADAGLA…FMELTDRLIR (207 aa). Position 177–232 (177–232) interacts with ATP; sequence VASLSFPMFVKPVSLGSSVGITKVNSESELAEAITHACSLDSKVLIEQAVKGREVE. The Mg(2+) site is built by Asp303, Glu317, and Asn319.

This sequence belongs to the D-alanine--D-alanine ligase family. It depends on Mg(2+) as a cofactor. The cofactor is Mn(2+).

It is found in the cytoplasm. The catalysed reaction is 2 D-alanine + ATP = D-alanyl-D-alanine + ADP + phosphate + H(+). Its pathway is cell wall biogenesis; peptidoglycan biosynthesis. Functionally, cell wall formation. In Chlorobium luteolum (strain DSM 273 / BCRC 81028 / 2530) (Pelodictyon luteolum), this protein is D-alanine--D-alanine ligase.